A 1198-amino-acid polypeptide reads, in one-letter code: Integrator complex subunit 2 (1198 aa).

A helical transmembrane segment spans residues 421 to 437 (FVSLSFCMLLAFSTLVS).

It belongs to the Integrator subunit 2 family. Component of the Integrator complex, composed of core subunits INTS1, INTS2, INTS3, INTS4, INTS5, INTS6, INTS7, INTS8, INTS9/RC74, INTS10, INTS11/CPSF3L, INTS12, INTS13, INTS14 and INTS15. The core complex associates with protein phosphatase 2A subunits PPP2CA and PPP2R1A, to form the Integrator-PP2A (INTAC) complex.

It localises to the nucleus. Its subcellular location is the nucleus membrane. The protein localises to the cytoplasm. Component of the integrator complex, a multiprotein complex that terminates RNA polymerase II (Pol II) transcription in the promoter-proximal region of genes. The integrator complex provides a quality checkpoint during transcription elongation by driving premature transcription termination of transcripts that are unfavorably configured for transcriptional elongation: the complex terminates transcription by (1) catalyzing dephosphorylation of the C-terminal domain (CTD) of Pol II subunit POLR2A/RPB1 and SUPT5H/SPT5, (2) degrading the exiting nascent RNA transcript via endonuclease activity and (3) promoting the release of Pol II from bound DNA. The integrator complex is also involved in terminating the synthesis of non-coding Pol II transcripts, such as enhancer RNAs (eRNAs), small nuclear RNAs (snRNAs), telomerase RNAs and long non-coding RNAs (lncRNAs). Mediates recruitment of cytoplasmic dynein to the nuclear envelope, probably as component of the integrator complex. The polypeptide is Integrator complex subunit 2 (Ints2) (Mus musculus (Mouse)).